Consider the following 963-residue polypeptide: Pyruvate, phosphate dikinase 1, chloroplastic (963 aa).

A chloroplast-targeting transit peptide spans methionine 1–alanine 76. Position 543 is a phosphothreonine; by PDRP1 (threonine 543). Histidine 545 functions as the Tele-phosphohistidine intermediate in the catalytic mechanism. Positions 651, 707, 836, 857, 858, 859, and 860 each coordinate substrate. Glutamate 836 serves as a coordination point for Mg(2+). A Mg(2+)-binding site is contributed by aspartate 860. The active-site Proton donor is cysteine 922.

It belongs to the PEP-utilizing enzyme family. In terms of assembly, homotetramer. Interacts with RP1 and RP2. Mg(2+) serves as cofactor. In terms of processing, phosphorylation of Thr-543 in the dark inactivates the enzyme. Dephosphorylation upon light stimulation reactivates the enzyme. In terms of tissue distribution, isoform 1 is expressed in leaves, flowers and siliques. Isoform 2 is found in cotyledons, rosette and cauline leaves, petioles, flowers and siliques.

It is found in the plastid. Its subcellular location is the chloroplast. The protein resides in the cytoplasm. It carries out the reaction pyruvate + phosphate + ATP = phosphoenolpyruvate + AMP + diphosphate + H(+). Its activity is regulated as follows. Activated by light-induced dephosphorylation. Inhibited by dark-induced phosphorylation. Both reactions are catalyzed by PDRP1. Its function is as follows. Formation of phosphoenolpyruvate. May be involved in regulating the flux of carbon into starch and fatty acids of seeds and in the remobilization of nitrogen reserves in senescing leaves. The protein is Pyruvate, phosphate dikinase 1, chloroplastic (PPDK) of Arabidopsis thaliana (Mouse-ear cress).